The primary structure comprises 602 residues: Sulfite reductase [NADPH] hemoprotein beta-component (602 aa).

Basic and acidic residues predominate over residues 1-15; the sequence is MDDHKTASPPRERSY. A disordered region spans residues 1–24; it reads MDDHKTASPPRERSYETPPAERPI. Positions 458, 464, 503, and 507 each coordinate [4Fe-4S] cluster. C507 contributes to the siroheme binding site.

Belongs to the nitrite and sulfite reductase 4Fe-4S domain family. In terms of assembly, alpha(8)-beta(8). The alpha component is a flavoprotein, the beta component is a hemoprotein. It depends on siroheme as a cofactor. [4Fe-4S] cluster serves as cofactor.

The enzyme catalyses hydrogen sulfide + 3 NADP(+) + 3 H2O = sulfite + 3 NADPH + 4 H(+). The protein operates within sulfur metabolism; hydrogen sulfide biosynthesis; hydrogen sulfide from sulfite (NADPH route): step 1/1. Its function is as follows. Component of the sulfite reductase complex that catalyzes the 6-electron reduction of sulfite to sulfide. This is one of several activities required for the biosynthesis of L-cysteine from sulfate. The protein is Sulfite reductase [NADPH] hemoprotein beta-component of Methylobacterium nodulans (strain LMG 21967 / CNCM I-2342 / ORS 2060).